A 90-amino-acid chain; its full sequence is UPF0223 protein LMHCC_1569 (90 aa).

It belongs to the UPF0223 family.

This is UPF0223 protein LMHCC_1569 from Listeria monocytogenes serotype 4a (strain HCC23).